The chain runs to 409 residues: Calsequestrin-2 (409 aa).

A signal peptide spans 1–19 (MKRAHLFVVGVYLLSSCRA). At tyrosine 282 the chain carries Phosphotyrosine. Asparagine 335 carries an N-linked (GlcNAc...) asparagine glycan. A disordered region spans residues 364-409 (DVLSGKINTEDDDNEDEDDDDDNDDDDDDNGNSDEEDNDDSDEDDE). Residues 373–409 (EDDDNEDEDDDDDNDDDDDDNGNSDEEDNDDSDEDDE) are compositionally biased toward acidic residues.

Belongs to the calsequestrin family. As to quaternary structure, monomer, homodimer and homooligomer. Mostly monomeric in the absence of calcium. Forms higher oligomers in a calcium-dependent manner. Dimers associate to form tetramers, that then form linear homomer chains. Interacts with ASPH and TRDN. Post-translationally, phosphorylation in the C-terminus, probably by CK2, moderately increases calcium buffering capacity. In terms of processing, N-glycosylated. As to expression, detected in heart muscle (at protein level).

Its subcellular location is the sarcoplasmic reticulum lumen. In terms of biological role, calsequestrin is a high-capacity, moderate affinity, calcium-binding protein and thus acts as an internal calcium store in muscle. Calcium ions are bound by clusters of acidic residues at the protein surface, especially at the interface between subunits. Can bind around 60 Ca(2+) ions. Regulates the release of lumenal Ca(2+) via the calcium release channel RYR2; this plays an important role in triggering muscle contraction. Plays a role in excitation-contraction coupling in the heart and in regulating the rate of heart beats. This chain is Calsequestrin-2 (CASQ2), found in Oryctolagus cuniculus (Rabbit).